Reading from the N-terminus, the 457-residue chain is Argininosuccinate lyase (457 aa).

The protein belongs to the lyase 1 family. Argininosuccinate lyase subfamily.

The protein localises to the cytoplasm. The enzyme catalyses 2-(N(omega)-L-arginino)succinate = fumarate + L-arginine. Its pathway is amino-acid biosynthesis; L-arginine biosynthesis; L-arginine from L-ornithine and carbamoyl phosphate: step 3/3. In Shigella boydii serotype 18 (strain CDC 3083-94 / BS512), this protein is Argininosuccinate lyase.